Reading from the N-terminus, the 335-residue chain is Ferrochelatase (335 aa).

Fe cation is bound by residues His192 and Glu291.

This sequence belongs to the ferrochelatase family.

It is found in the cytoplasm. It catalyses the reaction heme b + 2 H(+) = protoporphyrin IX + Fe(2+). It participates in porphyrin-containing compound metabolism; protoheme biosynthesis; protoheme from protoporphyrin-IX: step 1/1. In terms of biological role, catalyzes the ferrous insertion into protoporphyrin IX. This chain is Ferrochelatase, found in Bdellovibrio bacteriovorus (strain ATCC 15356 / DSM 50701 / NCIMB 9529 / HD100).